We begin with the raw amino-acid sequence, 556 residues long: Optineurin (556 aa).

The segment at 1–33 (MSSKPQIRPAENGEHCRSKMENGMDSMAPPTLS) is disordered. Basic and acidic residues predominate over residues 11–22 (ENGEHCRSKMEN). Residues 38 to 164 (EEMVQQMKEL…SELQVKLNIA (127 aa)) adopt a coiled-coil conformation. An LIR motif is present at residues 168-173 (DSFVEI). A coiled-coil region spans residues 219-487 (VSQLLCCLRN…LLKEQQNLED (269 aa)). Residues 245-274 (ERLSKMENETSNCLESGTQTNQEEESSEAI) form a disordered region. A compositionally biased stretch (polar residues) spans 253–265 (ETSNCLESGTQTN). The UBAN motif lies at 453–458 (DFHAER). The disordered stretch occupies residues 496-524 (MQNRHGARAPDREHSPRLVQRGTGSQEWP). A CCHC NOA-type zinc finger spans residues 526 to 556 (QRNISIYSCPKCEEILPDLDTLQIHVMDCIN). Cys-534, Cys-537, His-550, and Cys-554 together coordinate Zn(2+).

In terms of assembly, binds to linear ubiquitin chains. Interacts with LC3 family members. As to expression, expressed in erythrocytes, skeletal muscle, heart, spleen and brain. Weakly expressed in lung and liver (at protein level).

Its subcellular location is the cytoplasm. It localises to the perinuclear region. The protein localises to the golgi apparatus. The protein resides in the trans-Golgi network. It is found in the cytoplasmic vesicle. Its subcellular location is the recycling endosome. It localises to the autophagosome. In terms of biological role, probably part of the TNF-alpha signaling pathway that can shift the equilibrium toward induction of cell death. May act by regulating membrane trafficking and cellular morphogenesis. May act as autophagy receptor that interacts directly with both the cargo to become degraded and an autophagy modifier of the MAP1 LC3 family. In Gallus gallus (Chicken), this protein is Optineurin (OPTN).